A 169-amino-acid polypeptide reads, in one-letter code: Succinate dehydrogenase cytochrome b560 subunit, mitochondrial (169 aa).

Residues 1-29 (MAAFLLRHVSRHCLRAHLNAQLCIRNAAP) constitute a mitochondrion transit peptide. The Mitochondrial matrix portion of the chain corresponds to 30–62 (LGTTAKEEMERFWKKNTSSNRPLSPHLTIYKWS). Residues 63–92 (LPMALSVCHRGSGIALSGGVSLFGLSALLL) form a helical membrane-spanning segment. Topologically, residues 93–112 (PGNFESYLMFVKSLCLGPTL) are mitochondrial intermembrane. A helical membrane pass occupies residues 113–137 (IYSAKFVLVFPLMYHSLNGIRHLLW). Heme b is bound at residue His-127. At 138–144 (DLGKGLA) the chain is on the mitochondrial matrix side. A helical membrane pass occupies residues 145-166 (IPQVWLSGVAVVVLAVLSSGGL). The Mitochondrial intermembrane portion of the chain corresponds to 167 to 169 (AAL).

It belongs to the cytochrome b560 family. As to quaternary structure, component of complex II composed of four subunits: the flavoprotein (FP) SDHA, iron-sulfur protein (IP) SDHB, and a cytochrome b560 composed of SDHC and SDHD. The cofactor is heme b.

The protein localises to the mitochondrion inner membrane. Its pathway is carbohydrate metabolism; tricarboxylic acid cycle. Functionally, membrane-anchoring subunit of succinate dehydrogenase (SDH) that is involved in complex II of the mitochondrial electron transport chain and is responsible for transferring electrons from succinate to ubiquinone (coenzyme Q). SDH also oxidizes malate to the non-canonical enol form of oxaloacetate, enol-oxaloacetate. Enol-oxaloacetate, which is a potent inhibitor of the succinate dehydrogenase activity, is further isomerized into keto-oxaloacetate. This chain is Succinate dehydrogenase cytochrome b560 subunit, mitochondrial (Sdhc), found in Mus musculus (Mouse).